The following is a 142-amino-acid chain: Serine/threonine-protein kinase BtrW (142 aa).

It belongs to the anti-sigma-factor family. In terms of assembly, probably able to multimerize; interacts with BtrV.

It carries out the reaction L-seryl-[protein] + ATP = O-phospho-L-seryl-[protein] + ADP + H(+). The catalysed reaction is L-threonyl-[protein] + ATP = O-phospho-L-threonyl-[protein] + ADP + H(+). Its function is as follows. Possible negative regulator of sigma-B activity. Phosphorylates and inactivates its specific antagonist protein, BtrV. Upon phosphorylation of BtrV, BtrW is released and binds to an unknown partner(s) that might be sigma-B, thereby blocking its ability to form a complex with its partner (possibly an RNA polymerase holoenzyme (E-sigma-B)). Involved in type III secretion system (T3SS). Phosphorylates BtrV. The sequence is that of Serine/threonine-protein kinase BtrW (btrW) from Bordetella bronchiseptica (strain ATCC BAA-588 / NCTC 13252 / RB50) (Alcaligenes bronchisepticus).